The primary structure comprises 134 residues: Natriuretic peptides B (134 aa).

The signal sequence occupies residues 1–26; the sequence is MDPQTAPSRALLLLLFLHLAFLGGRS. O-linked (Xyl...) (chondroitin sulfate) serine glycosylation is present at Ser41. O-linked (HexNAc...) threonine; Partial glycosylation is present at Thr62. 2 O-linked (HexNAc...) serine glycosylation sites follow: Ser63 and Ser70. Thr74 is a glycosylation site (O-linked (HexNAc...) threonine). A glycan (O-linked (HexNAc...) serine) is linked at Ser79. A glycan (O-linked (HexNAc...) threonine; Partial) is linked at Thr84. Thr97 is a glycosylation site (O-linked (HexNAc...) threonine). Cysteines 112 and 128 form a disulfide.

It belongs to the natriuretic peptide family. In terms of processing, the precursor molecule is proteolytically cleaved by the endoproteases FURIN or CORIN at Arg-102 to produce brain natriuretic peptide 32 and NT-proBNP. This likely occurs after it has been secreted into the blood, either during circulation or in the target cells. CORIN also cleaves the precursor molecule at additional residues including Arg-99 and possibly Lys-105. In patients with heart failure, processing and degradation of natriuretic peptides B occurs but is delayed, possibly due to a decrease in enzyme level or activity of CORIN and DPP4. Undergoes further proteolytic cleavage by various proteases such as DPP4, MME and possibly FAP, to give rise to a variety of shorter peptides. Cleaved at Pro-104 by the prolyl endopeptidase FAP (seprase) activity (in vitro). Degraded by IDE. During IDE degradation, the resulting products initially increase the activation of NPR1 and can also stimulate NPR2 to produce cGMP before the fragments are completely degraded and inactivated by IDE (in vitro). Post-translationally, O-glycosylated on at least seven residues. In cardiomyocytes, glycosylation at Thr-97 is essential for the stability and processing of the extracellular natriuretic peptides B. Glycosylation, especially at Thr-97, may also be important for brain natriuretic peptide 32 stability and/or extracellular distribution. Glycosylation at Thr-97 appears to inhibit FURIN- or CORIN-mediated proteolytic processing, at least in HEK293 cells. As to expression, detected in the cardiac atria (at protein level). Detected in the kidney distal tubular cells (at protein level).

It localises to the secreted. Functionally, cardiac hormone that plays a key role in mediating cardio-renal homeostasis. May also function as a paracrine antifibrotic factor in the heart. Acts by specifically binding and stimulating NPR1 to produce cGMP, which in turn activates effector proteins that drive various biological responses. Involved in regulating the extracellular fluid volume and maintaining the fluid-electrolyte balance through natriuresis, diuresis, vasorelaxation, and inhibition of renin and aldosterone secretion. Binds the clearance receptor NPR3. May affect cardio-renal homeostasis. Able to promote the production of cGMP although its potency is very low compared to brain natriuretic peptide 32. In terms of biological role, may have a role in cardio-renal homeostasis. Able to promote the production of cGMP. This is Natriuretic peptides B (NPPB) from Homo sapiens (Human).